Reading from the N-terminus, the 2527-residue chain is Highly reducing polyketide synthase poxF (2527 aa).

The Ketosynthase family 3 (KS3) domain occupies 20 to 445; the sequence is VMPIAIIGMA…GANAHVIVES (426 aa). Catalysis depends on for beta-ketoacyl synthase activity residues C193, H328, and H368. The segment at 560–882 is malonyl-CoA:ACP transacylase (MAT) domain; sequence VFTGQGAQWF…TYASCLSRGQ (323 aa). An N-terminal hotdog fold region spans residues 951–1086; it reads HDLLGVPAAG…GLCCTPSPAQ (136 aa). The dehydratase (DH) domain stretch occupies residues 951–1243; sequence HDLLGVPAAG…SVRVINNAGT (293 aa). Residues 951–1270 form the PKS/mFAS DH domain; the sequence is HDLLGVPAAG…CQSLGSSAVV (320 aa). The active-site Proton acceptor; for dehydratase activity is the H983. A C-terminal hotdog fold region spans residues 1108 to 1270; that stretch reads AWRILNPADT…CQSLGSSAVV (163 aa). The Proton donor; for dehydratase activity role is filled by D1174. The methyltransferase (CMet) domain stretch occupies residues 1406-1587; it reads EDQAEWSSVS…RLLAKAGFEP (182 aa). The segment at 1823-2137 is enoyl reductase (ER) (ER) domain; that stretch reads GLLNSLVFTE…TGKHMGKIVL (315 aa). The interval 2162–2339 is ketoreductase (KR) domain; that stretch reads TYLLVGGVGG…AVSIDLGMVS (178 aa). The Carrier domain maps to 2445–2522; it reads EVTTLIQSAL…GLAGQMAKKS (78 aa). Position 2482 is an O-(pantetheine 4'-phosphoryl)serine (S2482).

Its pathway is secondary metabolite biosynthesis. Its function is as follows. Highly reducing polyketide synthase; part of the gene cluster that mediates the biosynthesis of oxaleimides, cytotoxic compounds containing an unusual disubstituted succinimide moiety. The first step of the pathway is provided by the HR-PKS poxF that serves in a new mode of collaborative biosynthesis with the PKS-NRPS poxE, by providing the olefin containing amino acid substrate via the synthesis of an ACP-bound dec-4-enoate. The cytochrome P450 monooxygenase poxM-catalyzed oxidation at the alpha-position creates the enzyme-bound 2-hydroxydec-4-enoyl-ACP thioester, which may be prone to spontaneous hydrolysis to yield 2-hydroxydec-4-enoic acid due to increased electrophilicity of the carbonyl. 2-hydroxydec-4-enoic acid can then be further oxidized by poxM to yield the alpha-ketoacid 2-oxodec-4-enoicacid, which is reductively aminated by the aminotransferase poxL to yield (S,E)-2-aminodec-4-enoic acid. The Hybrid PKS-NRPS synthetase poxE then performs condensation between the octaketide product of its PKS modules and the amino group of (S,E)-2-aminodec-4-enoic acid which is activated and incorporated by the adenylation domain. The resulting aminoacyl product can be cyclized by the Diels-Alderase PoxQ and reductively released by the reductive (R) domain of poxE to yield an aldehyde intermediate. The released aldehyde is then substrate for a Knoevenagel condensation by the hydrolyase poxO followed by an oxidation at the 5-position of the pyrrolidone ring. The presence of the olefin from the amino acid building block allows for migration of the substituted allyl group to occur. This allylic transposition reaction takes place in a conjugate addition, semipinacol-like fashion to yield a succinimide intermediate. Iterative two-electron oxidations of the C7 methyl of the succinimide intermediate to the carboxylic acid can be catalyzed by one of two remaining cytochrome P450 monooxygenasess poxC or poxD to yield oxaleimide A. Subsequent oxidation yields the maleimide scaffold oxaleimide I. Both oxaleimide A and oxaleimide I can undergo oxidative modifications in the decalin ring to yield the series of products oxaleimides B to H. This is Highly reducing polyketide synthase poxF from Penicillium oxalicum.